The chain runs to 402 residues: 2-pyrone synthase (402 aa).

Acetoacetyl-CoA is bound by residues Lys-60, Arg-63, Cys-169, Leu-272, Arg-274, Gly-310, Arg-312, and Ala-313. Cys-169 is an active-site residue.

This sequence belongs to the thiolase-like superfamily. Chalcone/stilbene synthases family. As to expression, expressed in both vegetative and reproductive organs. The expression is strong in the leaf, scape (the inflorescence stem) and corolla (both in the ligule and the unpigmented tube), moderate in the bract and carpel, detectable in the root and pappus but not detectable in the stamen.

It carries out the reaction 2 malonyl-CoA + acetyl-CoA + 2 H(+) = triacetate lactone + 2 CO2 + 3 CoA. Functionally, polyketide synthase, which uses acetyl-CoA and two condensation reactions with malonyl-CoA to form triacetic acid lactone (also called methylpyrone), a precursor of phytoalexin. May participate in insect and pathogen resistance. The sequence is that of 2-pyrone synthase from Gerbera hybrida (Daisy).